The chain runs to 99 residues: Integration host factor subunit alpha (99 aa).

The segment at 49-75 (FGNFDLRDKNQRPGRNPKTGEDIPITA) is disordered.

This sequence belongs to the bacterial histone-like protein family. As to quaternary structure, heterodimer of an alpha and a beta chain.

This protein is one of the two subunits of integration host factor, a specific DNA-binding protein that functions in genetic recombination as well as in transcriptional and translational control. In Salmonella arizonae (strain ATCC BAA-731 / CDC346-86 / RSK2980), this protein is Integration host factor subunit alpha.